The primary structure comprises 427 residues: Tyrosine--tRNA ligase (427 aa).

Residue Y33 coordinates L-tyrosine. The 'HIGH' region signature appears at 38 to 47 (PTAPSLHVGN). L-tyrosine contacts are provided by Y168 and Q172. A 'KMSKS' region motif is present at residues 228-232 (KFGKS). Residue K231 coordinates ATP. The S4 RNA-binding domain maps to 358–426 (EHMLDLVAST…GKKHHYLIKV (69 aa)).

It belongs to the class-I aminoacyl-tRNA synthetase family. TyrS type 1 subfamily. In terms of assembly, homodimer.

It is found in the cytoplasm. It carries out the reaction tRNA(Tyr) + L-tyrosine + ATP = L-tyrosyl-tRNA(Tyr) + AMP + diphosphate + H(+). In terms of biological role, catalyzes the attachment of tyrosine to tRNA(Tyr) in a two-step reaction: tyrosine is first activated by ATP to form Tyr-AMP and then transferred to the acceptor end of tRNA(Tyr). In Amoebophilus asiaticus (strain 5a2), this protein is Tyrosine--tRNA ligase.